We begin with the raw amino-acid sequence, 230 residues long: Orotidine 5'-phosphate decarboxylase (230 aa).

Residues aspartate 11, lysine 34, 61–70 (DLKLHDIPNT), threonine 117, arginine 179, glutamine 188, glycine 208, and arginine 209 contribute to the substrate site. The active-site Proton donor is lysine 63.

This sequence belongs to the OMP decarboxylase family. Type 1 subfamily. As to quaternary structure, homodimer.

It carries out the reaction orotidine 5'-phosphate + H(+) = UMP + CO2. It functions in the pathway pyrimidine metabolism; UMP biosynthesis via de novo pathway; UMP from orotate: step 2/2. Its function is as follows. Catalyzes the decarboxylation of orotidine 5'-monophosphate (OMP) to uridine 5'-monophosphate (UMP). The sequence is that of Orotidine 5'-phosphate decarboxylase from Streptococcus pyogenes serotype M28 (strain MGAS6180).